The chain runs to 578 residues: Protein O-linked-mannose beta-1,4-N-acetylglucosaminyltransferase 2 (578 aa).

Residues 1–4 lie on the Cytoplasmic side of the membrane; the sequence is MNIS. A helical; Signal-anchor for type II membrane protein transmembrane segment spans residues 5 to 25; that stretch reads AVFSALLVSIMAAVLWKHVKL. Residues 26–578 are Lumenal-facing; the sequence is LDQFYVIEEE…PFAEVLVCST (553 aa). Residues asparagine 98, asparagine 275, asparagine 335, asparagine 451, asparagine 541, and asparagine 563 are each glycosylated (N-linked (GlcNAc...) asparagine). Residues 484-578 enclose the Fibronectin type-III domain; that stretch reads RESKCQASAQ…PFAEVLVCST (95 aa).

The protein belongs to the glycosyltransferase 61 family.

Its subcellular location is the endoplasmic reticulum membrane. The enzyme catalyses 3-O-(alpha-D-mannosyl)-L-threonyl-[protein] + UDP-N-acetyl-alpha-D-glucosamine = 3-O-(N-acetyl-beta-D-glucosaminyl-(1-&gt;4)-alpha-D-mannosyl)-L-threonyl-[protein] + UDP + H(+). It functions in the pathway protein modification; protein glycosylation. Functionally, O-linked mannose beta-1,4-N-acetylglucosaminyltransferase that transfers UDP-N-acetyl-D-glucosamine to the 4-position of the mannose to generate N-acetyl-D-glucosamine-beta-1,4-O-D-mannosylprotein. Involved in the biosynthesis of the phosphorylated O-mannosyl trisaccharide (N-acetylgalactosamine-beta-3-N-acetylglucosamine-beta-4-(phosphate-6-)mannose), a carbohydrate structure present in alpha-dystroglycan (DAG1), which is required for binding laminin G-like domain-containing extracellular proteins with high affinity. The polypeptide is Protein O-linked-mannose beta-1,4-N-acetylglucosaminyltransferase 2 (pomgnt2) (Xenopus laevis (African clawed frog)).